The sequence spans 242 residues: Ribosomal RNA small subunit methyltransferase G (242 aa).

Residues Gly-82, Phe-87, 133 to 134 (AE), and Arg-152 each bind S-adenosyl-L-methionine.

This sequence belongs to the methyltransferase superfamily. RNA methyltransferase RsmG family.

The protein resides in the cytoplasm. In terms of biological role, specifically methylates the N7 position of a guanine in 16S rRNA. The polypeptide is Ribosomal RNA small subunit methyltransferase G (Acetivibrio thermocellus (strain ATCC 27405 / DSM 1237 / JCM 9322 / NBRC 103400 / NCIMB 10682 / NRRL B-4536 / VPI 7372) (Clostridium thermocellum)).